Reading from the N-terminus, the 352-residue chain is SKP1-like protein 20 (352 aa).

The interaction with the F-box domain of F-box proteins stretch occupies residues 108-167 (TSAADSLQLKPLVDLTSRALARIIEGKNPEEIREIFHLPDDLTEEEKLEPLKNSMDDPRI). Disordered stretches follow at residues 214–251 (KAVK…RSKQ) and 267–288 (LLSA…DIDD). The segment covering 216 to 230 (VKMSKGKKKKKKKKD) has biased composition (basic residues). Residues 239 to 249 (IHDKESHDLRS) are compositionally biased toward basic and acidic residues.

Belongs to the SKP1 family. As to quaternary structure, part of a SCF (SKP1-cullin-F-box) protein ligase complex. Expressed in young seedlings, roots, leaves, floral stems, inflorescences, and siliques.

The protein resides in the nucleus. Its pathway is protein modification; protein ubiquitination. In terms of biological role, involved in ubiquitination and subsequent proteasomal degradation of target proteins. Together with CUL1, RBX1 and a F-box protein, it forms a SCF E3 ubiquitin ligase complex. The functional specificity of this complex depends on the type of F-box protein. In the SCF complex, it serves as an adapter that links the F-box protein to CUL1. This chain is SKP1-like protein 20 (ASK20), found in Arabidopsis thaliana (Mouse-ear cress).